Reading from the N-terminus, the 639-residue chain is DNA gyrase subunit B (639 aa).

Basic and acidic residues predominate over residues 392–402 (QAEELTRRKSA). A disordered region spans residues 392–416 (QAEELTRRKSALESTSLPGKLADCQ). Positions 423-537 (SELFIVEGDS…AGYVYAAQPP (115 aa)) constitute a Toprim domain. Mg(2+) contacts are provided by E429, D502, and D504. K624 participates in a covalent cross-link: Glycyl lysine isopeptide (Lys-Gly) (interchain with G-Cter in SAMP2).

Belongs to the type II topoisomerase GyrB family. Heterotetramer, composed of two GyrA and two GyrB chains. In the heterotetramer, GyrA contains the active site tyrosine that forms a transient covalent intermediate with DNA, while GyrB binds cofactors and catalyzes ATP hydrolysis. Mg(2+) serves as cofactor. It depends on Mn(2+) as a cofactor. The cofactor is Ca(2+).

It is found in the cytoplasm. The enzyme catalyses ATP-dependent breakage, passage and rejoining of double-stranded DNA.. A type II topoisomerase that negatively supercoils closed circular double-stranded (ds) DNA in an ATP-dependent manner to modulate DNA topology and maintain chromosomes in an underwound state. Negative supercoiling favors strand separation, and DNA replication, transcription, recombination and repair, all of which involve strand separation. Also able to catalyze the interconversion of other topological isomers of dsDNA rings, including catenanes and knotted rings. Type II topoisomerases break and join 2 DNA strands simultaneously in an ATP-dependent manner. This chain is DNA gyrase subunit B, found in Haloferax volcanii (strain ATCC 29605 / DSM 3757 / JCM 8879 / NBRC 14742 / NCIMB 2012 / VKM B-1768 / DS2) (Halobacterium volcanii).